Reading from the N-terminus, the 626-residue chain is Endogenous retrovirus group S71 member 1 Env polyprotein (626 aa).

The N-terminal stretch at 1–38 is a signal peptide; the sequence is MGPEAWVRPLKTAPKPGEAIRLILFIYLSCFFLPVMSS. A surface protein region spans residues 39–438; that stretch reads EPSYSFLLTS…PPELHPRLHQ (400 aa). Residues 39–575 lie on the Extracellular side of the membrane; the sequence is EPSYSFLLTS…FNWNPWLTTL (537 aa). The short motif at 302–305 is the CXXC element; sequence CWLC. The fusion peptide stretch occupies residues 439–459; that stretch reads AVPLLVPLLAGLSIAGSAAIG. Residues 439-626 are transmembrane protein; sequence AVPLLVPLLA…KTQYDTLVNN (188 aa). The CKS-17 motif lies at 503-519; that stretch reads LQNCRCLDLLFLSQGGL. C520 and C527 are joined by a disulfide. The short motif at 520–528 is the CX6CC element; the sequence is CAALGESCC. A helical membrane pass occupies residues 576–596; sequence ITGLAGPLLILLLSLIFGPCI. Residues 597-626 are Cytoplasmic-facing; the sequence is LNSFLNFIKQRIASVKLTYLKTQYDTLVNN.

It belongs to the gamma type-C retroviral envelope protein family. HERV class-I T env subfamily. The CXXC motif is highly conserved across a broad range of retroviral envelope proteins. It is thought to participate in the formation of a labile disulfide bond possibly with the CX6CC motif present in the transmembrane domain. Expressed at higher level in thyroid. Expressed at lower level in adrenal, bone marrow, brain, breast, kidney, ovary, placenta, prostate, skin, testis and trachea.

It is found in the cell membrane. Functionally, retroviral envelope proteins mediate receptor recognition and membrane fusion during early infection. Endogenous envelope proteins may have kept, lost or modified their original function during evolution. This endogenous envelope protein has lost its original fusogenic properties. This chain is Endogenous retrovirus group S71 member 1 Env polyprotein (ERVS71-1), found in Homo sapiens (Human).